We begin with the raw amino-acid sequence, 97 residues long: YcgL domain-containing protein Pfl01_1389 (97 aa).

The YcgL domain occupies 3–87 (RICSIYQSSK…AEEEYIEHLP (85 aa)).

In Pseudomonas fluorescens (strain Pf0-1), this protein is YcgL domain-containing protein Pfl01_1389.